A 451-amino-acid polypeptide reads, in one-letter code: KNR4/SMI1 homolog 1 (451 aa).

A compositionally biased stretch (polar residues) spans 410–422 (ENQIAGGSDNAKN). The segment at 410 to 451 (ENQIAGGSDNAKNQVKLGETSDTKQDDTSKIASTVSTSDEDE) is disordered. Residues 428–438 (ETSDTKQDDTS) are compositionally biased toward basic and acidic residues. The segment covering 439-451 (KIASTVSTSDEDE) has biased composition (polar residues).

This sequence belongs to the KNR4/SMI1 family.

In Debaryomyces hansenii (strain ATCC 36239 / CBS 767 / BCRC 21394 / JCM 1990 / NBRC 0083 / IGC 2968) (Yeast), this protein is KNR4/SMI1 homolog 1.